The sequence spans 157 residues: SsrA-binding protein (157 aa).

The protein belongs to the SmpB family.

Its subcellular location is the cytoplasm. Functionally, required for rescue of stalled ribosomes mediated by trans-translation. Binds to transfer-messenger RNA (tmRNA), required for stable association of tmRNA with ribosomes. tmRNA and SmpB together mimic tRNA shape, replacing the anticodon stem-loop with SmpB. tmRNA is encoded by the ssrA gene; the 2 termini fold to resemble tRNA(Ala) and it encodes a 'tag peptide', a short internal open reading frame. During trans-translation Ala-aminoacylated tmRNA acts like a tRNA, entering the A-site of stalled ribosomes, displacing the stalled mRNA. The ribosome then switches to translate the ORF on the tmRNA; the nascent peptide is terminated with the 'tag peptide' encoded by the tmRNA and targeted for degradation. The ribosome is freed to recommence translation, which seems to be the essential function of trans-translation. This is SsrA-binding protein from Chlorobium chlorochromatii (strain CaD3).